We begin with the raw amino-acid sequence, 292 residues long: Quinolinate synthase (292 aa).

Iminosuccinate-binding residues include His8 and Ser25. Cys70 is a binding site for [4Fe-4S] cluster. Residues 96–98 and Ser113 each bind iminosuccinate; that span reads YVN. A [4Fe-4S] cluster-binding site is contributed by Cys158. Iminosuccinate-binding positions include 184–186 and Thr201; that span reads HPE. Cys244 serves as a coordination point for [4Fe-4S] cluster.

It belongs to the quinolinate synthase family. Type 2 subfamily. [4Fe-4S] cluster serves as cofactor.

The protein localises to the cytoplasm. It carries out the reaction iminosuccinate + dihydroxyacetone phosphate = quinolinate + phosphate + 2 H2O + H(+). The protein operates within cofactor biosynthesis; NAD(+) biosynthesis; quinolinate from iminoaspartate: step 1/1. In terms of biological role, catalyzes the condensation of iminoaspartate with dihydroxyacetone phosphate to form quinolinate. This chain is Quinolinate synthase (nadA), found in Methanopyrus kandleri (strain AV19 / DSM 6324 / JCM 9639 / NBRC 100938).